The following is a 306-amino-acid chain: D-alanine--D-alanine ligase (306 aa).

The 203-residue stretch at 101-303 (KQVWQAVGLP…FSQLVVKILE (203 aa)) folds into the ATP-grasp domain. An ATP-binding site is contributed by 134–189 (FTHLGLPLIVKPSREGSSVGMSKVNTLSELPAALEEAFRHDDDILVEKWLSGPEYT). Residues D257, E270, and N272 each coordinate Mg(2+).

Belongs to the D-alanine--D-alanine ligase family. Requires Mg(2+) as cofactor. The cofactor is Mn(2+).

The protein localises to the cytoplasm. The enzyme catalyses 2 D-alanine + ATP = D-alanyl-D-alanine + ADP + phosphate + H(+). Its pathway is cell wall biogenesis; peptidoglycan biosynthesis. Its function is as follows. Cell wall formation. This Pectobacterium carotovorum subsp. carotovorum (strain PC1) protein is D-alanine--D-alanine ligase.